Reading from the N-terminus, the 179-residue chain is ATP synthase subunit delta (179 aa).

The protein belongs to the ATPase delta chain family. In terms of assembly, F-type ATPases have 2 components, F(1) - the catalytic core - and F(0) - the membrane proton channel. F(1) has five subunits: alpha(3), beta(3), gamma(1), delta(1), epsilon(1). F(0) has three main subunits: a(1), b(2) and c(10-14). The alpha and beta chains form an alternating ring which encloses part of the gamma chain. F(1) is attached to F(0) by a central stalk formed by the gamma and epsilon chains, while a peripheral stalk is formed by the delta and b chains.

It is found in the cell inner membrane. In terms of biological role, f(1)F(0) ATP synthase produces ATP from ADP in the presence of a proton or sodium gradient. F-type ATPases consist of two structural domains, F(1) containing the extramembraneous catalytic core and F(0) containing the membrane proton channel, linked together by a central stalk and a peripheral stalk. During catalysis, ATP synthesis in the catalytic domain of F(1) is coupled via a rotary mechanism of the central stalk subunits to proton translocation. This protein is part of the stalk that links CF(0) to CF(1). It either transmits conformational changes from CF(0) to CF(1) or is implicated in proton conduction. The protein is ATP synthase subunit delta of Maricaulis maris (strain MCS10) (Caulobacter maris).